The sequence spans 607 residues: ATP-dependent RNA helicase DBP6 (607 aa).

The segment at 1-83 (MFAARFDPSR…GTGEADKRHQ (83 aa)) is disordered. Residues 34–59 (QDESESEMSSAESEDEAMQLDDEEEV) are compositionally biased toward acidic residues. A compositionally biased stretch (basic and acidic residues) spans 60–69 (VDSKGKENHG). A Q motif motif is present at residues 184-192 (AFPIQTALL). Residues 208 to 388 (RYYTRKVGDI…DLQLHNPKLF (181 aa)) form the Helicase ATP-binding domain. 221–228 (ASTGSGKT) serves as a coordination point for ATP. The short motif at 328–331 (DEAD) is the DEAD box element. The region spanning 419–578 (ILLRLLPLLS…GSHLFFDEEQ (160 aa)) is the Helicase C-terminal domain.

Belongs to the DEAD box helicase family. DDX51/DBP6 subfamily. As to quaternary structure, associated with pre-ribosomal particles.

It localises to the nucleus. The protein resides in the nucleolus. The enzyme catalyses ATP + H2O = ADP + phosphate + H(+). Functionally, ATP-binding RNA helicase involved in the biogenesis of 60S ribosomal subunits and is required for the normal formation of 25S and 5.8S rRNAs. In Eremothecium gossypii (strain ATCC 10895 / CBS 109.51 / FGSC 9923 / NRRL Y-1056) (Yeast), this protein is ATP-dependent RNA helicase DBP6 (DBP6).